A 796-amino-acid chain; its full sequence is Probable phosphoketolase (796 aa).

It belongs to the XFP family. Requires thiamine diphosphate as cofactor.

This Synechococcus elongatus (strain ATCC 33912 / PCC 7942 / FACHB-805) (Anacystis nidulans R2) protein is Probable phosphoketolase.